The primary structure comprises 382 residues: UDP-4-amino-4-deoxy-L-arabinose--oxoglutarate aminotransferase (382 aa).

Lysine 183 is subject to N6-(pyridoxal phosphate)lysine.

This sequence belongs to the DegT/DnrJ/EryC1 family. ArnB subfamily. Homodimer. Pyridoxal 5'-phosphate serves as cofactor.

It carries out the reaction UDP-4-amino-4-deoxy-beta-L-arabinose + 2-oxoglutarate = UDP-beta-L-threo-pentopyranos-4-ulose + L-glutamate. The protein operates within nucleotide-sugar biosynthesis; UDP-4-deoxy-4-formamido-beta-L-arabinose biosynthesis; UDP-4-deoxy-4-formamido-beta-L-arabinose from UDP-alpha-D-glucuronate: step 2/3. It functions in the pathway bacterial outer membrane biogenesis; lipopolysaccharide biosynthesis. Functionally, catalyzes the conversion of UDP-4-keto-arabinose (UDP-Ara4O) to UDP-4-amino-4-deoxy-L-arabinose (UDP-L-Ara4N). The modified arabinose is attached to lipid A and is required for resistance to polymyxin and cationic antimicrobial peptides. This is UDP-4-amino-4-deoxy-L-arabinose--oxoglutarate aminotransferase from Pseudomonas aeruginosa (strain LESB58).